We begin with the raw amino-acid sequence, 59 residues long: Small, acid-soluble spore protein C1 (59 aa).

It belongs to the alpha/beta-type SASP family. SASP are degraded in the first minutes of spore germination and provide amino acids for both new protein synthesis and metabolism.

Its function is as follows. SASP are bound to spore DNA. They are double-stranded DNA-binding proteins that cause DNA to change to an a-like conformation. They protect the DNA backbone from chemical and enzymatic cleavage and are thus involved in dormant spore's high resistance to UV light. In Clostridium perfringens (strain 13 / Type A), this protein is Small, acid-soluble spore protein C1 (sspC1).